We begin with the raw amino-acid sequence, 157 residues long: SsrA-binding protein (157 aa).

The segment covering 136–151 has biased composition (basic and acidic residues); that stretch reads KRETSAKRDWSREKQR. Residues 136-157 form a disordered region; it reads KRETSAKRDWSREKQRLLKQNS.

It belongs to the SmpB family.

It is found in the cytoplasm. Its function is as follows. Required for rescue of stalled ribosomes mediated by trans-translation. Binds to transfer-messenger RNA (tmRNA), required for stable association of tmRNA with ribosomes. tmRNA and SmpB together mimic tRNA shape, replacing the anticodon stem-loop with SmpB. tmRNA is encoded by the ssrA gene; the 2 termini fold to resemble tRNA(Ala) and it encodes a 'tag peptide', a short internal open reading frame. During trans-translation Ala-aminoacylated tmRNA acts like a tRNA, entering the A-site of stalled ribosomes, displacing the stalled mRNA. The ribosome then switches to translate the ORF on the tmRNA; the nascent peptide is terminated with the 'tag peptide' encoded by the tmRNA and targeted for degradation. The ribosome is freed to recommence translation, which seems to be the essential function of trans-translation. This is SsrA-binding protein from Cereibacter sphaeroides (strain ATCC 17029 / ATH 2.4.9) (Rhodobacter sphaeroides).